Reading from the N-terminus, the 426-residue chain is Probable imidazolonepropionase (426 aa).

4-imidazolone-5-propanoate contacts are provided by Y159 and H192. Y159 serves as a coordination point for N-formimidoyl-L-glutamate. Residue H260 participates in Fe(3+) binding. H260 is a Zn(2+) binding site. Position 263 (E263) interacts with 4-imidazolone-5-propanoate. D334 lines the Fe(3+) pocket. Residue D334 participates in Zn(2+) binding. Residue N336 coordinates N-formimidoyl-L-glutamate.

The protein belongs to the metallo-dependent hydrolases superfamily. HutI family. Zn(2+) is required as a cofactor. Requires Fe(3+) as cofactor.

It carries out the reaction 4-imidazolone-5-propanoate + H2O = N-formimidoyl-L-glutamate. The protein operates within amino-acid degradation; L-histidine degradation into L-glutamate; N-formimidoyl-L-glutamate from L-histidine: step 3/3. This chain is Probable imidazolonepropionase (AMDHD1), found in Bos taurus (Bovine).